The chain runs to 334 residues: Glyceraldehyde-3-phosphate dehydrogenase (334 aa).

NAD(+) contacts are provided by residues 12–13 (RI), Asp37, Arg81, and Ser123. Residues 153–155 (SCT) and Thr184 each bind D-glyceraldehyde 3-phosphate. Cys154 serves as the catalytic Nucleophile. An NAD(+)-binding site is contributed by Asn185. D-glyceraldehyde 3-phosphate is bound by residues Arg199, 212-213 (TG), and Arg235. NAD(+) is bound at residue Asn314.

The protein belongs to the glyceraldehyde-3-phosphate dehydrogenase family. As to quaternary structure, homotetramer.

It localises to the cytoplasm. It carries out the reaction D-glyceraldehyde 3-phosphate + phosphate + NAD(+) = (2R)-3-phospho-glyceroyl phosphate + NADH + H(+). Its pathway is carbohydrate degradation; glycolysis; pyruvate from D-glyceraldehyde 3-phosphate: step 1/5. Its function is as follows. Catalyzes the oxidative phosphorylation of glyceraldehyde 3-phosphate (G3P) to 1,3-bisphosphoglycerate (BPG) using the cofactor NAD. The first reaction step involves the formation of a hemiacetal intermediate between G3P and a cysteine residue, and this hemiacetal intermediate is then oxidized to a thioester, with concomitant reduction of NAD to NADH. The reduced NADH is then exchanged with the second NAD, and the thioester is attacked by a nucleophilic inorganic phosphate to produce BPG. The protein is Glyceraldehyde-3-phosphate dehydrogenase (gap) of Pseudomonas aeruginosa (strain ATCC 15692 / DSM 22644 / CIP 104116 / JCM 14847 / LMG 12228 / 1C / PRS 101 / PAO1).